The sequence spans 165 residues: MAGTALKRLMAEYKQLTLNPPEGIVAGPMNEENFFEWEALIMGPEDTCFEFGVFPAILSFPLDYPLSPPKMRFTCEMFHPNIYPDGRVCISILHAPGDDPMGYESSAERWSPVQSVEKILLSVVSMLAEPNDESGANVDASKMWRDDREQFYKIAKQIVQKSLGL.

At alanine 2 the chain carries N-acetylalanine. The UBC core domain occupies 4-164 (TALKRLMAEY…AKQIVQKSLG (161 aa)). The Glycyl thioester intermediate role is filled by cysteine 89.

The protein belongs to the ubiquitin-conjugating enzyme family. Interacts with AUP1 (via C-terminus); the interaction recruits UBE2G2 to lipid droplets. Interacts with ubiquitin ligases AMFR/gp78 and RNF139/TRC8; recruitment to lipid droplets by AUP1 facilitates interaction of UBE2G2 with AMFR and RNF139, leading to sterol-induced ubiquitination of 3-hydroxy-3-methylglutaryl coenzyme A reductase and its subsequent proteasomal degradation.

Its subcellular location is the endoplasmic reticulum. It is found in the lipid droplet. It carries out the reaction S-ubiquitinyl-[E1 ubiquitin-activating enzyme]-L-cysteine + [E2 ubiquitin-conjugating enzyme]-L-cysteine = [E1 ubiquitin-activating enzyme]-L-cysteine + S-ubiquitinyl-[E2 ubiquitin-conjugating enzyme]-L-cysteine.. It functions in the pathway protein modification; protein ubiquitination. Accepts ubiquitin from the E1 complex and catalyzes its covalent attachment to other proteins. In vitro catalyzes 'Lys-48'-linked polyubiquitination. Involved in endoplasmic reticulum-associated degradation (ERAD). Required for sterol-induced ubiquitination of 3-hydroxy-3-methylglutaryl coenzyme A reductase and its subsequent proteasomal degradation. The sequence is that of Ubiquitin-conjugating enzyme E2 G2 from Homo sapiens (Human).